Reading from the N-terminus, the 457-residue chain is MATRIPGTVAASGVYYNDQYRMPCKLKGIHCMALNCIPQKAKVRKCMNGYQSTFRFCVNEKNGQTTGQSNGSLIQQGQNFRCHSYGSHNSSETKECSLEDGTDSYRDFEEHSRGASQFSDNQVAAKKKSVKSSQGLAEACKFVYNDAKFVNERAQNDILLLSRGITRLNKRACQDVAVLGSGFLKLDARARKDTKKIDHSVKERAARLTHFARILKEQAQSDLKKAADQHWSDGALEADLRRADSVVRRRAMEDAFMALKFVRDIHDMMANRLQEQFAKDGSSSPANSRSFITLEKNGNTFELFPHEVSTDQITAIEQAYWSMASALSEADGIDYTDPEELELLVATLIDLDAMDGKKSVSLLAECSSSPDVNTRKALANALAAAPSMWILGNAGMGALQRLAQDSNYAVARAATRAINELTKQWELEEGDSLRFVLNQNMVSKETADDSAAADDTR.

The transit peptide at 1–57 directs the protein to the chloroplast; it reads MATRIPGTVAASGVYYNDQYRMPCKLKGIHCMALNCIPQKAKVRKCMNGYQSTFRFC.

The protein belongs to the ATA15/OSA15 family. Expressed in leaves (at protein level).

The protein resides in the plastid. The protein localises to the chloroplast. In terms of biological role, may be involved in the regulation of leaf senescence. The chain is Senescence-associated protein OSA15, chloroplastic from Oryza sativa subsp. japonica (Rice).